A 238-amino-acid polypeptide reads, in one-letter code: Sarcospan (238 aa).

The interval 1-33 (MGKDRQPRGQQRQGDAAGPDDPGPKKGAGTREQ) is disordered. The Extracellular segment spans residues 1–48 (MGKDRQPRGQQRQGDAAGPDDPGPKKGAGTREQRGEEEAQTCCGCRFP). A compositionally biased stretch (low complexity) spans 8-20 (RGQQRQGDAAGPD). The chain crosses the membrane as a helical span at residues 49–69 (LLLALLQLALGVAVTVVGFLM). At 70-81 (ASVSSSLLVRAT) the chain is on the cytoplasmic side. A helical membrane pass occupies residues 82-102 (PYWAGIIVCVVAYLGLFMLCV). The Cytoplasmic segment spans residues 103-117 (SYQVDERTCIQFSMK). The helical transmembrane segment at 118-138 (LLYFVLSALGLVVCVLAVAFA) threads the bilayer. Over 139 to 188 (AHHYSLLTHLTCENAPDSCQCKLPSSEPLSRTFVYRDVTDCTSITGTFQV) the chain is Extracellular. A helical membrane pass occupies residues 189–209 (FLLVQMVLNLVCGLVCLVACF). The Cytoplasmic segment spans residues 210–238 (VMWKHRYQVFYVGVRMCPLSASEGQQQKV).

It localises to the cell membrane. The protein localises to the sarcolemma. Its subcellular location is the postsynaptic cell membrane. Component of the dystrophin-glycoprotein complex (DGC), a complex that spans the muscle plasma membrane and forms a link between the F-actin cytoskeleton and the extracellular matrix. Preferentially associates with the sarcoglycan subcomplex of the DGC. In Oryctolagus cuniculus (Rabbit), this protein is Sarcospan (SSPN).